Here is a 535-residue protein sequence, read N- to C-terminus: MTKYIFVTGGVVSSLGKGITAASLGRLLKNRGLNVTIQKFDPYINVDPGTMSPYQHGEVFVTDDGAETDLDLGHYERFIDINLNKYSNVTTGKIYSSVLQKERRGEYLGGTVQVIPHITNEIKERVYRSGRETNADVVITEIGGTVGDIESLPFLEAIRQIKSDIGRDNVMYIHCTLIPYLKAAGEMKTKPTQHSVKELRSLGIQPNIIVVRTEMPVSQDMKDKLALFCDIDTKAVIEARDADTLYAVPLSLQEQNMDQIVCDHLKLDNPAADMTEWTALVNKVRNLSKKTKIALVGKYVELQDAYISVVEALRHAGYSFDTDVEVKWVNAEHVTAENVKELVGDTDGILVPGGFGDRGVEGKIVAIQYARENKVPFLGICLGMQLASIEFARNVLGLEGANSSEINPDTPYAIIDLLPEQKDVEDLGGTLRLGLYPCKLAEETNAYNAYNEPVVYERHRHRYEFNNQFRPDMEKEGFVFSGTSPDGRLVEIIELKDHPWFVAAQFHPELVSRPNRPQPLFHDFVRASITNKESK.

The tract at residues 1 to 267 (MTKYIFVTGG…DQIVCDHLKL (267 aa)) is amidoligase domain. Position 13 (Ser-13) interacts with CTP. Ser-13 is a binding site for UTP. 14–19 (SLGKGI) is an ATP binding site. Tyr-54 is a binding site for L-glutamine. An ATP-binding site is contributed by Asp-71. The Mg(2+) site is built by Asp-71 and Glu-141. Residues 148–150 (DIE), 188–193 (KTKPTQ), and Lys-224 contribute to the CTP site. Residues 188–193 (KTKPTQ) and Lys-224 contribute to the UTP site. Position 240-242 (240-242 (RDA)) interacts with ATP. The Glutamine amidotransferase type-1 domain occupies 292–534 (KIALVGKYVE…VRASITNKES (243 aa)). Gly-354 contributes to the L-glutamine binding site. Residue Cys-381 is the Nucleophile; for glutamine hydrolysis of the active site. L-glutamine contacts are provided by residues 382–385 (LGMQ), Glu-405, and Arg-462. Active-site residues include His-507 and Glu-509.

It belongs to the CTP synthase family. In terms of assembly, homotetramer.

The enzyme catalyses UTP + L-glutamine + ATP + H2O = CTP + L-glutamate + ADP + phosphate + 2 H(+). The catalysed reaction is L-glutamine + H2O = L-glutamate + NH4(+). It carries out the reaction UTP + NH4(+) + ATP = CTP + ADP + phosphate + 2 H(+). It participates in pyrimidine metabolism; CTP biosynthesis via de novo pathway; CTP from UDP: step 2/2. Its activity is regulated as follows. Allosterically activated by GTP, when glutamine is the substrate; GTP has no effect on the reaction when ammonia is the substrate. The allosteric effector GTP functions by stabilizing the protein conformation that binds the tetrahedral intermediate(s) formed during glutamine hydrolysis. Inhibited by the product CTP, via allosteric rather than competitive inhibition. Functionally, catalyzes the ATP-dependent amination of UTP to CTP with either L-glutamine or ammonia as the source of nitrogen. Regulates intracellular CTP levels through interactions with the four ribonucleotide triphosphates. This chain is CTP synthase, found in Bacillus cereus (strain ATCC 14579 / DSM 31 / CCUG 7414 / JCM 2152 / NBRC 15305 / NCIMB 9373 / NCTC 2599 / NRRL B-3711).